A 137-amino-acid chain; its full sequence is MLVPKRVKHRREFRGKMRGEAKGGKEVSFGEYGLQATTSHWITNRQIEAARIAMTRYMKRGGKVWIKIFPHKSYTAKAIGVRMGSGKGAPEGWVAPVKRGKVMFEIAGVSEEIAREALRLASHKLPVKCKFVKREAE.

The protein belongs to the universal ribosomal protein uL16 family. In terms of assembly, part of the 50S ribosomal subunit.

Its function is as follows. Binds 23S rRNA and is also seen to make contacts with the A and possibly P site tRNAs. This Streptococcus pyogenes serotype M1 protein is Large ribosomal subunit protein uL16.